We begin with the raw amino-acid sequence, 462 residues long: Cytochrome b558/566 subunit A (462 aa).

Residues 1–8 (MSLKIKSK) lie on the Cytoplasmic side of the membrane. A helical membrane pass occupies residues 9 to 26 (ITIGVLLIIFLLSIIFTL). Over 27-431 (ENVSLAQTSP…TSTSPVTTIS (405 aa)) the chain is Extracellular. 16 N-linked (GlcNAc...) asparagine glycosylation sites follow: Asn-28, Asn-65, Asn-91, Asn-121, Asn-144, Asn-164, Asn-174, Asn-183, Asn-211, Asn-278, Asn-279, Asn-293, Asn-316, Asn-339, Asn-353, and Asn-376. The helical transmembrane segment at 432–456 (SAIPPVTLYVTIIGVVVALVALVIL) threads the bilayer. The Cytoplasmic segment spans residues 457–462 (YVVFRR).

The cofactor is heme. Post-translationally, N-glycosylated on at least seven Asn residues by identical hexasaccharide units composed of Man, GlcNAc, Glc and 6-deoxy-6-sulfoglucose residues in the molar ration of 2:2:1:1. O-glycosylated on probably as many as 35 positions by single Man residues.

It is found in the cell membrane. In terms of biological role, monoheme cytochrome whose physiological function is not yet clear. This is Cytochrome b558/566 subunit A (cbsA) from Sulfolobus acidocaldarius (strain ATCC 33909 / DSM 639 / JCM 8929 / NBRC 15157 / NCIMB 11770).